Consider the following 210-residue polypeptide: Na(+)-translocating NADH-quinone reductase subunit D (210 aa).

5 helical membrane-spanning segments follow: residues 42–62, 72–92, 103–123, 131–151, and 178–198; these read FVMTLAVTFVTALSNFSVSLI, IIVQMAIIASLVIVVDQVLKA, VFVGLIITNCIVMGRAEAFAM, LIDGIGNGLGYGFVLITVGFF, and NGLMLLAPSAFFLIGFLIWVI.

It belongs to the NqrDE/RnfAE family. As to quaternary structure, composed of six subunits; NqrA, NqrB, NqrC, NqrD, NqrE and NqrF.

It localises to the cell inner membrane. The catalysed reaction is a ubiquinone + n Na(+)(in) + NADH + H(+) = a ubiquinol + n Na(+)(out) + NAD(+). Its function is as follows. NQR complex catalyzes the reduction of ubiquinone-1 to ubiquinol by two successive reactions, coupled with the transport of Na(+) ions from the cytoplasm to the periplasm. NqrA to NqrE are probably involved in the second step, the conversion of ubisemiquinone to ubiquinol. The polypeptide is Na(+)-translocating NADH-quinone reductase subunit D (Vibrio parahaemolyticus serotype O3:K6 (strain RIMD 2210633)).